The primary structure comprises 1800 residues: MASSLAAQLSQIAAKSTNQLNLKAQRIAHSQSLIFDWKTATTQDFDTVYQICFEGFQELCQLDPRFAPFERTIFSEQSKAEDRTEMNAAQNKELDTVVEAFLALVGGHLLLSPAVKAVDWLIRRFRVHEYNTEFTILTFLPYYTTPLFLNLLSILPEDLTPTFKILNPYKKSQINPPRHPLVHSATTNKHFLAAVNRYTLQVSKQRAHHHALLSFWAGTLTEAVAGMLDSSRSGRREVEKEKHEDVVMKVLPVLNDGLALKDVSELVIGCYMVCVVLAQKSSLQDKLLDGLMEAVAGSWTDETKESGLICLSVLAQKKSDARIPKRAFKAVLRLEDPVQQLSAISAQYPTSHLLLGLVAGCVDDLSKQKDLSRLDLLSLLFETNLLGEQEAGKAMAVILQAVSHAHTEGVLSLDAQTHLAELVQHFTQSESLQPIFQKTIEDSSIDVAALEHNLQTVIESVPTTTPAIGDVEMEDVQQEAVEDNFASVLESVAGKNLESSALSAQSMPAYESLVQTFALAVGSQEKLQAFVDLPALKKADASTSPQYLSFFIRTFSGSYPIGTRITALNQISSLLNSATPDVDLQALLPFLLVALADSSERVRREAAGVLAAIGSLYKKSKKGDANVWARDTIYGKQSKNVQWIAGRDVQKIVERAFLPGLEEYVLDQAHIGRVLEATLRGSSTSDSGATELKKPLRLSLFTFLCSHAVQMPLYAPKLSLLKLLNRVDKAGGTTRTKELGPFLKTWRDMKEHTAKDVCERERVSVADVDREAVMTVTPKDKDAISLLLSNVSPYSDSLRPSFVTAIFNRMKAVWGTVAEELQVDAAEKLFEISLEDVQTPLVHGCRDVLRSVQLTGSVLLQFLRKIPVSITDMESLGPAPKRRRTSQNNMVAMTIKDEAKLSQLMEKMTFILELVDSSTPEAHPELADGLFQTLAALHHFKSQIQSGLSYLLSLTLGSLLAIVNRSKGTAKAQFDTSVIRADLVVDCVRTTDSPQVQNAALLLVAGLSVIAPELVLHSVMPIFTFMGSSVLRKDDEYSVSVIDQTIDQVVPALIQSLRNQKRDVVSGTSELLLSFTAAFEHIPSHRRLRLFHALVTKLGTQDFLFAVLAMLANRYALDKDVLILMTGLVSDASAPVELNTYSKFLDLVKDSLSSKPGISQVLLGIGSDDGRDPQKVAVDLLRALAYLFKHSSLKVKMAKDFATEGDKVVGQIRTLFSRILEQVLAIGESMQNVKPVSQASGDVLSALFGTLSLVDFLDTIEVLLQRRNDELRRKVLRLLEGRLRQNPERDGASQHRMLDFLPTLVNIIQSSPDILLKHAAVACIDRIAEKYGRKEPTKVIHAAQVVASEACIGQDDERIRIMGVLCLASMAEVLGEAMIPALPDALSRSLALLEQSLEDGKENARLHDAVYSFFSALFIHIPFMVSGSHLDKILVLSYKSAVSEGVEDESREEALQLMARKVDVAATYAAIDRNWQHAVKAGPDATRETLGVVSLAIEKHPKSATVKNIAVLTSILFKAFDLRREQVSLDTQATFELSDVDEIEDIINEVTIKMIYKLNDTTFRPIFTKLLEWATTGVPKKDARGSLARLTTFYRFLQVFFGTLQSIVTGYSSYIIENVVSVLGKANPSNQDTKSLWLATMRMLKNSFEHDQDEFWQSPSHLTVIAQPLISQLAHAKNSSTASIVIAEAVPALTELAVAADSTDNHKELNTVLMRLLRPSAGPSGKTAGGENPHTRLAALKAQQSLTEQLGEEWLALLPEMLPYISELMEDEDENVEREVRKWVKQIEDVLGERLDDMLT.

HEAT repeat units follow at residues 426–467 and 581–619; these read FTQS…TTPA and DVDL…LYKK. Transmembrane regions (helical) follow at residues 944-964 and 1000-1020; these read IQSG…AIVN and ALLL…HSVM. HEAT repeat units follow at residues 1043–1081, 1250–1288, 1294–1333, and 1755–1793; these read DQTI…AFEH, TLSL…QNPE, QHRM…KYGR, and LALL…VLGE.

The protein belongs to the HEATR1/UTP10 family. Component of the ribosomal small subunit (SSU) processome.

It localises to the nucleus. The protein localises to the nucleolus. Its subcellular location is the membrane. Its function is as follows. Involved in nucleolar processing of pre-18S ribosomal RNA. Involved in ribosome biosynthesis. In Aspergillus niger (strain ATCC MYA-4892 / CBS 513.88 / FGSC A1513), this protein is U3 small nucleolar RNA-associated protein 10.